Consider the following 207-residue polypeptide: Small ribosomal subunit protein eS1 (207 aa).

Belongs to the eukaryotic ribosomal protein eS1 family.

In Methanosarcina barkeri (strain Fusaro / DSM 804), this protein is Small ribosomal subunit protein eS1.